The primary structure comprises 134 residues: Thioredoxin H2-2 (134 aa).

Residues 1–20 (MGSFFSTMFTPPPAADDGGD) form a disordered region. The Thioredoxin domain maps to 3 to 130 (SFFSTMFTPP…LERKVNMFIS (128 aa)). Residues Cys-56 and Cys-59 each act as nucleophile in the active site. Cys-56 and Cys-59 form a disulfide bridge.

It belongs to the thioredoxin family. Plant H-type subfamily.

It localises to the cytoplasm. Its function is as follows. Probable thiol-disulfide oxidoreductase that may be involved in the redox regulation of a number of cytosolic enzymes. This is Thioredoxin H2-2 from Oryza sativa subsp. japonica (Rice).